Reading from the N-terminus, the 303-residue chain is Porphobilinogen deaminase (303 aa).

Position 235 is an S-(dipyrrolylmethanemethyl)cysteine (cysteine 235).

Belongs to the HMBS family. Monomer. Dipyrromethane is required as a cofactor.

It catalyses the reaction 4 porphobilinogen + H2O = hydroxymethylbilane + 4 NH4(+). The protein operates within porphyrin-containing compound metabolism; protoporphyrin-IX biosynthesis; coproporphyrinogen-III from 5-aminolevulinate: step 2/4. Tetrapolymerization of the monopyrrole PBG into the hydroxymethylbilane pre-uroporphyrinogen in several discrete steps. The polypeptide is Porphobilinogen deaminase (Campylobacter fetus subsp. fetus (strain 82-40)).